The sequence spans 166 residues: Shikimate kinase (166 aa).

11–16 (GSGKST) contributes to the ATP binding site. Residue serine 15 participates in Mg(2+) binding. Residues aspartate 33, arginine 57, and glycine 79 each coordinate substrate. Arginine 117 is a binding site for ATP. Substrate is bound at residue arginine 134.

This sequence belongs to the shikimate kinase family. In terms of assembly, monomer. Mg(2+) serves as cofactor.

It localises to the cytoplasm. It carries out the reaction shikimate + ATP = 3-phosphoshikimate + ADP + H(+). Its pathway is metabolic intermediate biosynthesis; chorismate biosynthesis; chorismate from D-erythrose 4-phosphate and phosphoenolpyruvate: step 5/7. Its function is as follows. Catalyzes the specific phosphorylation of the 3-hydroxyl group of shikimic acid using ATP as a cosubstrate. This chain is Shikimate kinase, found in Sulfurihydrogenibium sp. (strain YO3AOP1).